The primary structure comprises 176 residues: Large ribosomal subunit protein bL17m (176 aa).

The N-terminal 8 residues, 1-8 (MRLSLAAA), are a transit peptide targeting the mitochondrion.

This sequence belongs to the bacterial ribosomal protein bL17 family. As to quaternary structure, component of the mitochondrial ribosome large subunit (39S) which comprises a 16S rRNA and about 50 distinct proteins.

The protein localises to the mitochondrion. The sequence is that of Large ribosomal subunit protein bL17m (Mrpl17) from Mus musculus (Mouse).